The following is a 279-amino-acid chain: Putative pyruvate, phosphate dikinase regulatory protein (279 aa).

153–160 (GISRTSKT) lines the ADP pocket.

This sequence belongs to the pyruvate, phosphate/water dikinase regulatory protein family. PDRP subfamily.

The enzyme catalyses N(tele)-phospho-L-histidyl/L-threonyl-[pyruvate, phosphate dikinase] + ADP = N(tele)-phospho-L-histidyl/O-phospho-L-threonyl-[pyruvate, phosphate dikinase] + AMP + H(+). It catalyses the reaction N(tele)-phospho-L-histidyl/O-phospho-L-threonyl-[pyruvate, phosphate dikinase] + phosphate + H(+) = N(tele)-phospho-L-histidyl/L-threonyl-[pyruvate, phosphate dikinase] + diphosphate. In terms of biological role, bifunctional serine/threonine kinase and phosphorylase involved in the regulation of the pyruvate, phosphate dikinase (PPDK) by catalyzing its phosphorylation/dephosphorylation. The protein is Putative pyruvate, phosphate dikinase regulatory protein of Brucella abortus (strain 2308).